We begin with the raw amino-acid sequence, 146 residues long: uncharacterized protein (146 aa).

A helical membrane pass occupies residues 6–26 (IPIFVISLSNISHIILAIFFF).

It is found in the membrane. This is an uncharacterized protein from Caenorhabditis elegans.